The chain runs to 345 residues: Glycerol-3-phosphate dehydrogenase [NAD(P)+] (345 aa).

NADPH contacts are provided by Ser-11, Trp-12, His-32, Arg-33, and Lys-106. 3 residues coordinate sn-glycerol 3-phosphate: Lys-106, Gly-137, and Ser-139. An NADPH-binding site is contributed by Ala-141. Positions 192, 245, 255, 256, and 257 each coordinate sn-glycerol 3-phosphate. The active-site Proton acceptor is the Lys-192. Arg-256 provides a ligand contact to NADPH. The NADPH site is built by Val-280 and Glu-282.

The protein belongs to the NAD-dependent glycerol-3-phosphate dehydrogenase family.

It localises to the cytoplasm. It carries out the reaction sn-glycerol 3-phosphate + NAD(+) = dihydroxyacetone phosphate + NADH + H(+). The catalysed reaction is sn-glycerol 3-phosphate + NADP(+) = dihydroxyacetone phosphate + NADPH + H(+). Its pathway is membrane lipid metabolism; glycerophospholipid metabolism. Does not seem to be inhibited by sn-glycerol 3-phosphate, in contrast to the E.coli homolog enzyme which is very sensitive to allosteric inhibition by G3P. Catalyzes the reduction of the glycolytic intermediate dihydroxyacetone phosphate (DHAP) to sn-glycerol 3-phosphate (G3P), the key precursor for phospholipid synthesis. The chain is Glycerol-3-phosphate dehydrogenase [NAD(P)+] from Bacillus subtilis (strain 168).